Reading from the N-terminus, the 417-residue chain is Tol-Pal system protein TolB (417 aa).

Positions 1–16 (MRYLWLFLIHTIGLFA) are cleaved as a signal peptide.

It belongs to the TolB family. As to quaternary structure, the Tol-Pal system is composed of five core proteins: the inner membrane proteins TolA, TolQ and TolR, the periplasmic protein TolB and the outer membrane protein Pal. They form a network linking the inner and outer membranes and the peptidoglycan layer.

The protein localises to the periplasm. In terms of biological role, part of the Tol-Pal system, which plays a role in outer membrane invagination during cell division and is important for maintaining outer membrane integrity. This is Tol-Pal system protein TolB from Helicobacter pylori (strain ATCC 700392 / 26695) (Campylobacter pylori).